Consider the following 308-residue polypeptide: Ribonuclease Z (308 aa).

7 residues coordinate Zn(2+): H60, H62, D64, H65, H140, D209, and H269. D64 serves as the catalytic Proton acceptor.

This sequence belongs to the RNase Z family. Homodimer. The cofactor is Zn(2+).

It carries out the reaction Endonucleolytic cleavage of RNA, removing extra 3' nucleotides from tRNA precursor, generating 3' termini of tRNAs. A 3'-hydroxy group is left at the tRNA terminus and a 5'-phosphoryl group is left at the trailer molecule.. Zinc phosphodiesterase, which displays some tRNA 3'-processing endonuclease activity. Probably involved in tRNA maturation, by removing a 3'-trailer from precursor tRNA. The sequence is that of Ribonuclease Z from Methanococcus maripaludis (strain DSM 14266 / JCM 13030 / NBRC 101832 / S2 / LL).